Consider the following 97-residue polypeptide: Ataxin-7-like protein 3B (97 aa).

The segment at 76–97 is disordered; that stretch reads SLPGDPGDGPQTELQRSPPEFQ. Residue S92 is modified to Phosphoserine.

The protein belongs to the SGF11 family. In terms of assembly, interacts strongly with ENY2. Interacts weakly with USP22.

The protein localises to the cytoplasm. By binding to ENY2, interferes with the nuclear functions of the deubiquitinase (DUB) module of the SAGA complex which consists of ENY2, ATXN7, ATXN7L3 and the histone deubiquitinating component USP22. Affects USP22 DUB activity toward histones indirectly by changing the subcellular distribution of ENY2 and altering ENY2 availability for ATXN7L3 interaction. Regulates H2B monoubiquitination (H2Bub1) levels through cytoplasmic sequestration of ENY2 resulting in loss of nuclear ENY2-ATXN7L3 association which destabilizes ATXN7L3. Affects protein expression levels of ENY2 and ATXN7L3. In Mus musculus (Mouse), this protein is Ataxin-7-like protein 3B (Atxn7l3b).